The sequence spans 123 residues: UPF0102 protein CLJ_B2665 (123 aa).

It belongs to the UPF0102 family.

The chain is UPF0102 protein CLJ_B2665 from Clostridium botulinum (strain 657 / Type Ba4).